The chain runs to 479 residues: Integrin-linked protein kinase 1 (479 aa).

A phosphoserine mark is found at Ser17 and Ser26. The disordered stretch occupies residues 29 to 73; the sequence is FTRQSSLDPRRTNMRFSFGRQSSLDPIRRSPDSSKSDDEPHMSVP. The segment covering 54–69 has biased composition (basic and acidic residues); that stretch reads PIRRSPDSSKSDDEPH. ANK repeat units follow at residues 77 to 106 and 110 to 139; these read DSTMQLLFMASKGDVRGIEELLDEGIDVNS and DGRTALHIAACEGHLGVVKALLSRRANIDA. The Protein kinase domain occupies 194-461; the sequence is LEVQVRKSDG…EIIIRLDKIV (268 aa). ATP contacts are provided by residues 200 to 208 and Lys222; that span reads KSDGISKGA. Asp319 serves as the catalytic Proton acceptor.

The protein belongs to the protein kinase superfamily. Ser/Thr protein kinase family. In terms of assembly, interacts with CML9 and POT5/HAK5. In terms of processing, autophosphorylated at Ser-17 and Ser-26.

Its subcellular location is the cell membrane. It is found in the endoplasmic reticulum membrane. It carries out the reaction L-seryl-[protein] + ATP = O-phospho-L-seryl-[protein] + ADP + H(+). The enzyme catalyses L-threonyl-[protein] + ATP = O-phospho-L-threonyl-[protein] + ADP + H(+). Its activity is regulated as follows. Kinase activity is suppressed by interaction with CML9. Its function is as follows. Functions as a link between plant defense pathways, stress responses and potassium homeostasis. Promotes osmotic stress sensitivity, responses to the bacterial-derived pathogen-associated molecular pattern (PAMP) flg22, and resistance to bacterial pathogens. Promotes the accumulation of POT5/HAK5, a potassium transporter that mediates high-affinity uptake during potassium deficiency. This is Integrin-linked protein kinase 1 from Arabidopsis thaliana (Mouse-ear cress).